Here is a 316-residue protein sequence, read N- to C-terminus: Nucleotide-binding protein NFA_35930 (316 aa).

Position 32-39 (32-39 (GLSGAGRG)) interacts with ATP. 83 to 86 (DVRS) is a GTP binding site.

Belongs to the RapZ-like family.

Its function is as follows. Displays ATPase and GTPase activities. The protein is Nucleotide-binding protein NFA_35930 of Nocardia farcinica (strain IFM 10152).